The following is an 89-amino-acid chain: Large ribosomal subunit protein bL27 (89 aa).

The disordered stretch occupies residues 1–21 (MAHKKAGGSSRNGRDSAGRRL).

The protein belongs to the bacterial ribosomal protein bL27 family.

The sequence is that of Large ribosomal subunit protein bL27 from Erythrobacter litoralis (strain HTCC2594).